A 389-amino-acid chain; its full sequence is Flap endonuclease 1 (389 aa).

Residues 1 to 110 (MGIKGLMKLL…GELAKRSDRR (110 aa)) form an N-domain region. Residue aspartate 35 coordinates Mg(2+). 2 residues coordinate DNA: arginine 48 and arginine 76. Aspartate 92 lines the Mg(2+) pocket. The interval 103-124 (LAKRSDRRQEAQKALEEATEKG) is disordered. Positions 128–259 (DIDRFNKRLV…KKAYAGIKEH (132 aa)) are I-domain. Residues glutamate 164, glutamate 166, aspartate 185, and aspartate 187 each contribute to the Mg(2+) site. Residue glutamate 164 participates in DNA binding. DNA-binding residues include glycine 237 and aspartate 239. Position 239 (aspartate 239) interacts with Mg(2+). Residues 350 to 358 (SQKRLDSFF) are interaction with PCNA. Positions 362–389 (PSANGAKKRKAPAAKGGKKAATAKKGKK) are disordered. The segment covering 367 to 389 (AKKRKAPAAKGGKKAATAKKGKK) has biased composition (basic residues).

Belongs to the XPG/RAD2 endonuclease family. FEN1 subfamily. In terms of assembly, interacts with PCNA. Three molecules of FEN1 bind to one PCNA trimer with each molecule binding to one PCNA monomer. PCNA stimulates the nuclease activity without altering cleavage specificity. Mg(2+) is required as a cofactor. In terms of processing, phosphorylated. Phosphorylation upon DNA damage induces relocalization to the nuclear plasma.

It localises to the nucleus. It is found in the nucleolus. Its subcellular location is the nucleoplasm. The protein localises to the mitochondrion. Its function is as follows. Structure-specific nuclease with 5'-flap endonuclease and 5'-3' exonuclease activities involved in DNA replication and repair. During DNA replication, cleaves the 5'-overhanging flap structure that is generated by displacement synthesis when DNA polymerase encounters the 5'-end of a downstream Okazaki fragment. It enters the flap from the 5'-end and then tracks to cleave the flap base, leaving a nick for ligation. Also involved in the long patch base excision repair (LP-BER) pathway, by cleaving within the apurinic/apyrimidinic (AP) site-terminated flap. Acts as a genome stabilization factor that prevents flaps from equilibrating into structures that lead to duplications and deletions. Also possesses 5'-3' exonuclease activity on nicked or gapped double-stranded DNA, and exhibits RNase H activity. Also involved in replication and repair of rDNA and in repairing mitochondrial DNA. The sequence is that of Flap endonuclease 1 from Phytophthora infestans (strain T30-4) (Potato late blight agent).